The following is a 295-amino-acid chain: UDP-N-acetylenolpyruvoylglucosamine reductase (295 aa).

The 166-residue stretch at 23–188 (KVGGPADFLA…ISAKFALKPG (166 aa)) folds into the FAD-binding PCMH-type domain. Arg167 is an active-site residue. The active-site Proton donor is the Ser217. Glu287 is a catalytic residue.

It belongs to the MurB family. Requires FAD as cofactor.

The protein localises to the cytoplasm. It carries out the reaction UDP-N-acetyl-alpha-D-muramate + NADP(+) = UDP-N-acetyl-3-O-(1-carboxyvinyl)-alpha-D-glucosamine + NADPH + H(+). Its pathway is cell wall biogenesis; peptidoglycan biosynthesis. Functionally, cell wall formation. This Streptococcus pyogenes serotype M3 (strain ATCC BAA-595 / MGAS315) protein is UDP-N-acetylenolpyruvoylglucosamine reductase.